Consider the following 501-residue polypeptide: Zinc finger C3HC-type protein 1 (501 aa).

Residue A2 is modified to N-acetylalanine. Residues 21 to 73 (VVRSPEGTPQKVRELIDEGIVPEEGGTEPKDTAATFQSVDGSPQAEQSPLEST) form a disordered region. Position 24 is a phosphoserine (S24). Phosphothreonine is present on T28. Polar residues predominate over residues 54 to 72 (ATFQSVDGSPQAEQSPLES). A phosphoserine mark is found at S58, S62, and S68. At T84 the chain carries Phosphothreonine. A C3HC-type zinc finger spans residues 102 to 156 (CAKYGWVTVECDMLKCSSCQAFLCASLQPTFDFGRYKERCAELKKSLCSAHEKFC). Residues 302-421 (SPIPGVEGRP…TSPRSFFDPT (120 aa)) form a disordered region. 2 positions are modified to phosphoserine: S320 and S328. The segment covering 326-338 (TRSQDATVSPGSE) has biased composition (polar residues). T332 is subject to Phosphothreonine. Phosphoserine is present on residues S334, S337, S343, S353, S358, S369, and S380. Polar residues-rich tracts occupy residues 350–359 (RTRSWESSSP) and 369–383 (SPTT…SMGT). T383 carries the phosphothreonine modification. S394 carries the post-translational modification Phosphoserine. A Nuclear localization signal motif is present at residues 395-401 (PLRRTKR). Phosphoserine occurs at positions 406 and 482. Positions 406-420 (SSSSSDTSPRSFFDP) are enriched in low complexity.

As to quaternary structure, interacts with TPR; this interaction mediates ZC3HC1 nuclear envelopes (NE)-association but also required for proper positioning of a substantial amount of TPR at the nuclear basket (NB). Phosphorylated. May also be weakly phosphorylated on Tyr residues.

Its subcellular location is the nucleus. The protein localises to the nucleus envelope. In terms of biological role, required for proper positioning of a substantial amount of TPR at the nuclear basket (NB) through interaction with TPR. This is Zinc finger C3HC-type protein 1 (Zc3hc1) from Mus musculus (Mouse).